Consider the following 54-residue polypeptide: Apelin receptor early endogenous ligand (54 aa).

Residues 1–22 (MRFQQFLFAFFIFIMSLLLISG) form the signal peptide. N-linked (GlcNAc...) asparagine glycosylation is present at N27.

Belongs to the Elabela/Toddler family. As to quaternary structure, interacts with APLNR. As to expression, expressed in the intima of blood vessels. Expressed in endothelial cells in blood vessels in the heart and lung. Expressed in cytotrophoblasts and syncytiotrophoblasts of first-trimester placental tissue and term placentas (at protein level). Not detected in smooth muscle cells or cardiomyocytes (at protein level). Expressed in kidney. Expressed in blood vessels. Expressed in embryonic (ESCs) and induced (iPSCs) pluripotent stem cells. Most highly expressed in undifferentiated embryonic stem cell and is rapidly down-regulated during differentiation.

The protein localises to the secreted. It is found in the extracellular space. Functionally, peptide hormone that functions as endogenous ligand for the G-protein-coupled apelin receptor (APLNR/APJ), that plays a role in the regulation of normal cardiovascular function and fluid homeostasis. Functions as a balanced agonist activating both G(i) protein pathway and beta-arrestin pathway of APLNR. Downstream G proteins activation, apelin can inhibit cAMP production and activate key intracellular effectors such as ERKs. On the other hand, APLNR activation induces beta-arrestin recruitment to the membrane leading to desensitization and internalization of the receptor. Required for mesendodermal differentiation, blood vessels formation and heart morphogenesis during early development and for adult cardiovascular homeostasis. Acts as a motogen by promoting mesendodermal cell migration during gastrulation by binding and activating APLNR. Acts as an early embryonic regulator of cellular movement with a role in migration and development of cardiac progenitor cells. May act as a chemoattractant for the activation of angioblast migration toward the embryonic midline, i.e. the position of the future vessel formation, during vasculogenesis. Positively regulates sinus venosus (SV)-derived endothelial cells migration into the developing heart to promote coronary blood vessel sprouting. Plays a role in placental vascular development; promotes placental trophoblast invasion and spiral artery remodeling in the uterus. Involved in the regulation of maternal cardiovascular homeostasis to prevent gestational hypertension and for potent cardioprotective functions during heart failure. Mediates myocardial contractility in an ERK1/2-dependent manner. The polypeptide is Apelin receptor early endogenous ligand (Homo sapiens (Human)).